A 305-amino-acid polypeptide reads, in one-letter code: RNA-binding protein rnp-1 (305 aa).

One can recognise an RRM domain in the interval 3 to 72 (SKLFVGNLPD…KVVNIKKSTS (70 aa)). The CCHC-type zinc finger occupies 84 to 97 (CFRCQSDEHRTPQC). The interval 284-305 (QQIQHQQATGSPAPVPAPPRLY) is disordered. Residues 296-305 (APVPAPPRLY) show a composition bias toward pro residues.

In terms of tissue distribution, expressed throughout the germline.

RNA-binding protein that is required for the germ line to transition from spermatogenesis to oogenesis and allow for normal oocyte development. The chain is RNA-binding protein rnp-1 from Caenorhabditis elegans.